A 292-amino-acid polypeptide reads, in one-letter code: Nucleotide-binding protein SACE_2139 (292 aa).

Residue 15 to 22 participates in ATP binding; sequence GLSGAGRS. Position 66–69 (66–69) interacts with GTP; that stretch reads DVRS.

It belongs to the RapZ-like family.

Its function is as follows. Displays ATPase and GTPase activities. This is Nucleotide-binding protein SACE_2139 from Saccharopolyspora erythraea (strain ATCC 11635 / DSM 40517 / JCM 4748 / NBRC 13426 / NCIMB 8594 / NRRL 2338).